Here is a 469-residue protein sequence, read N- to C-terminus: F-box only protein 3 (469 aa).

An F-box domain is found at Pro-10–His-56. An ApaG domain is found at Val-278 to Val-408. Acidic residues predominate over residues Glu-419–Glu-449. A disordered region spans residues Glu-419 to Arg-454.

As to quaternary structure, part of a SCF (SKP1-cullin-F-box) protein ligase complex SCF(FBXO3) consisting of FBXO3, SKP1, CUL1 and RBX1. Interacts with PML, interaction is direct and takes place either alone or within the SCF complex.

The protein localises to the nucleus. It functions in the pathway protein modification; protein ubiquitination. Functionally, substrate recognition component of the SCF (SKP1-CUL1-F-box protein)-type E3 ubiquitin ligase complex, SCF(FBXO3), which mediates the ubiquitination and subsequent proteasomal degradation of target proteins. Mediates the ubiquitination of HIPK2 and probably that of EP300, leading to rapid degradation by the proteasome. In the presence of PML, HIPK2 ubiquitination still occurs, but degradation is prevented. PML, HIPK2 and FBXO3 may act synergically to activate p53/TP53-dependent transactivation. The SCF(FBXO3) also acts as a regulator of inflammation by mediating ubiquitination and degradation of FBXL2 in response to lipopolysaccharide (LPS). The SCF(FBXO3) complex specifically recognizes FBXL2 phosphorylated at 'Thr-404' and promotes its ubiquitination. The sequence is that of F-box only protein 3 (FBXO3) from Bos taurus (Bovine).